The primary structure comprises 240 residues: MLMPMPEPDEAPVAALVNIAGGLAGGDRLSFTMTLDAQARATLCTAAAEKVYRSLGPDTDISNILTAGPEAALEWLPQETILFNGARLRRRMNVSLATDARLLATETIIFGRTAHQETFLNGHFSDHWRLWRDGKLLWADNFRLPDPPARVLDHPFGLNRHPAMATIVLAATDAAAYRDLLREKWQDETGKGVTVPRPGLLLGRLIGSATAVRQGVEEAMIILRTHAMHGPARLPRLWLS.

It belongs to the UreD family. UreD, UreF and UreG form a complex that acts as a GTP-hydrolysis-dependent molecular chaperone, activating the urease apoprotein by helping to assemble the nickel containing metallocenter of UreC. The UreE protein probably delivers the nickel.

It is found in the cytoplasm. Required for maturation of urease via the functional incorporation of the urease nickel metallocenter. The polypeptide is Urease accessory protein UreD (Granulibacter bethesdensis (strain ATCC BAA-1260 / CGDNIH1)).